The chain runs to 237 residues: Sugar fermentation stimulation protein homolog (237 aa).

It belongs to the SfsA family.

The chain is Sugar fermentation stimulation protein homolog from Pseudomonas syringae pv. syringae (strain B728a).